A 408-amino-acid polypeptide reads, in one-letter code: Putative UPF0496 protein 2 (408 aa).

Helical transmembrane passes span 224–244 (RIARGTAAAALVGACAAAIVA) and 252–272 (ALVGIGVAAAAFGATPAGAAR). Residues 385 to 408 (MARGLPPPSPATVTTTSEERLTSS) form a disordered region.

It belongs to the UPF0496 family.

It localises to the membrane. This Oryza sativa subsp. japonica (Rice) protein is Putative UPF0496 protein 2.